Consider the following 257-residue polypeptide: Small ribosomal subunit protein eS1 (257 aa).

Residues 236-257 form a disordered region; sequence TSAEGEKIERPDDYEPPVQESV. Over residues 239–248 the composition is skewed to basic and acidic residues; sequence EGEKIERPDD.

This sequence belongs to the eukaryotic ribosomal protein eS1 family. In terms of assembly, component of the small ribosomal subunit. Mature ribosomes consist of a small (40S) and a large (60S) subunit. The 40S subunit contains about 33 different proteins and 1 molecule of RNA (18S). The 60S subunit contains about 49 different proteins and 3 molecules of RNA (28S, 5.8S and 5S).

Its subcellular location is the cytoplasm. In Brugia malayi (Filarial nematode worm), this protein is Small ribosomal subunit protein eS1.